A 192-amino-acid chain; its full sequence is Aminodeoxychorismate synthase component 2 (192 aa).

The region spanning serine 3 to histidine 192 is the Glutamine amidotransferase type-1 domain. Residues cysteine 83, histidine 170, and glutamate 172 contribute to the active site.

As to quaternary structure, monomer. Heterodimer consisting of two non-identical subunits: a glutamine amidotransferase subunit (PabA) and a aminodeoxychorismate synthase subunit (PabB).

It catalyses the reaction chorismate + L-glutamine = 4-amino-4-deoxychorismate + L-glutamate. The protein operates within cofactor biosynthesis; tetrahydrofolate biosynthesis; 4-aminobenzoate from chorismate: step 1/2. Its function is as follows. Part of a heterodimeric complex that catalyzes the two-step biosynthesis of 4-amino-4-deoxychorismate (ADC), a precursor of p-aminobenzoate (PABA) and tetrahydrofolate. In the first step, a glutamine amidotransferase (PabA) generates ammonia as a substrate that, along with chorismate, is used in the second step, catalyzed by aminodeoxychorismate synthase (PabB) to produce ADC. PabA converts glutamine into glutamate only in the presence of stoichiometric amounts of PabB. The polypeptide is Aminodeoxychorismate synthase component 2 (Streptomyces lividans).